Consider the following 298-residue polypeptide: Protease HtpX homolog (298 aa).

The next 2 helical transmembrane spans lie at Val14 to Leu34 and Tyr39 to Phe59. His143 provides a ligand contact to Zn(2+). The active site involves Glu144. His147 serves as a coordination point for Zn(2+). Helical transmembrane passes span Ile158–Trp178 and Ile197–Ile217. Glu226 serves as a coordination point for Zn(2+).

This sequence belongs to the peptidase M48B family. It depends on Zn(2+) as a cofactor.

The protein localises to the cell membrane. This Streptococcus pyogenes serotype M6 (strain ATCC BAA-946 / MGAS10394) protein is Protease HtpX homolog.